The following is a 566-amino-acid chain: Osteoclast stimulatory transmembrane protein (566 aa).

At 1 to 51 (MPGHPGAAEQLVKTGWRSWHLGFWKALAPLQAAWDAFSQPVPASCGQLLTQ) the chain is on the cytoplasmic side. Residues 52-72 (LLLCASLAAAAAGLVYHWLAS) form a helical membrane-spanning segment. Residues 73-81 (LLLYPPGPS) lie on the Extracellular side of the membrane. A helical transmembrane segment spans residues 82–102 (AMVATVCGLLVFLSLGLVPPV). The Cytoplasmic portion of the chain corresponds to 103-128 (RCLFALSVPTLGMEQGRRLLLSYSTA). The helical transmembrane segment at 129-149 (TLAIAVVPNVLANVGAAGQVL) threads the bilayer. Topologically, residues 150–227 (RCVTEGSLES…ARAAALGTQR (78 aa)) are extracellular. Residues 228 to 248 (VVTGLFMLGLLVESAWYLHCY) traverse the membrane as a helical segment. Residues 249–304 (LTDLRFDNIYATQQLTQRLAQAQATHLLAPPPTWLLQAAQLRLSQEELLSCLLRLG) lie on the Cytoplasmic side of the membrane. A helical membrane pass occupies residues 305 to 325 (LLALLLVATAVAVATDHVAFL). Over 326-398 (LAQATVDWAQ…CPLLPARRPR (73 aa)) the chain is Extracellular. Residues 399-419 (AAAPLAAGALQLLAGSTVLLE) form a helical membrane-spanning segment. Topologically, residues 420–566 (AYARRLRHAI…EGNTGHDRPG (147 aa)) are cytoplasmic.

The protein localises to the membrane. In terms of biological role, probable cell surface receptor that plays a role in cellular fusion and cell differentiation. Cooperates with DCSTAMP in modulating cell-cell fusion in both osteoclasts and foreign body giant cells (FBGCs). Involved in osteoclast bone resorption. Promotes osteoclast differentiation and may play a role in the multinucleated osteoclast maturation. This is Osteoclast stimulatory transmembrane protein (OCSTAMP) from Homo sapiens (Human).